Consider the following 587-residue polypeptide: Aspartate--tRNA ligase (587 aa).

Glutamate 173 contacts L-aspartate. The segment at 197–200 (QTLK) is aspartate. Arginine 219 contributes to the L-aspartate binding site. ATP contacts are provided by residues 219–221 (RDE) and glutamine 228. Histidine 446 contributes to the L-aspartate binding site. Glutamate 480 contacts ATP. Residue arginine 487 participates in L-aspartate binding. 532–535 (GLDR) is an ATP binding site.

The protein belongs to the class-II aminoacyl-tRNA synthetase family. Type 1 subfamily. In terms of assembly, homodimer.

The protein localises to the cytoplasm. The enzyme catalyses tRNA(Asp) + L-aspartate + ATP = L-aspartyl-tRNA(Asp) + AMP + diphosphate. Functionally, catalyzes the attachment of L-aspartate to tRNA(Asp) in a two-step reaction: L-aspartate is first activated by ATP to form Asp-AMP and then transferred to the acceptor end of tRNA(Asp). In Bacteroides thetaiotaomicron (strain ATCC 29148 / DSM 2079 / JCM 5827 / CCUG 10774 / NCTC 10582 / VPI-5482 / E50), this protein is Aspartate--tRNA ligase.